A 108-amino-acid chain; its full sequence is Integration host factor subunit alpha (108 aa).

Belongs to the bacterial histone-like protein family. As to quaternary structure, heterodimer of an alpha and a beta chain.

Its function is as follows. This protein is one of the two subunits of integration host factor, a specific DNA-binding protein that functions in genetic recombination as well as in transcriptional and translational control. This is Integration host factor subunit alpha from Bartonella henselae (strain ATCC 49882 / DSM 28221 / CCUG 30454 / Houston 1) (Rochalimaea henselae).